A 56-amino-acid polypeptide reads, in one-letter code: Small ribosomal subunit protein uS14 (56 aa).

4 residues coordinate Zn(2+): Cys21, Cys24, Cys39, and Cys42.

This sequence belongs to the universal ribosomal protein uS14 family. As to quaternary structure, component of the small ribosomal subunit (SSU). Mature N.crassa ribosomes consist of a small (40S) and a large (60S) subunit. The 40S small subunit contains 1 molecule of ribosomal RNA (18S rRNA) and at least 32 different proteins. The large 60S subunit contains 3 rRNA molecules (26S, 5.8S and 5S rRNA) and at least 42 different proteins. The cofactor is Zn(2+).

The protein localises to the cytoplasm. Its function is as follows. Component of the ribosome, a large ribonucleoprotein complex responsible for the synthesis of proteins in the cell. The small ribosomal subunit (SSU) binds messenger RNAs (mRNAs) and translates the encoded message by selecting cognate aminoacyl-transfer RNA (tRNA) molecules. The large subunit (LSU) contains the ribosomal catalytic site termed the peptidyl transferase center (PTC), which catalyzes the formation of peptide bonds, thereby polymerizing the amino acids delivered by tRNAs into a polypeptide chain. The nascent polypeptides leave the ribosome through a tunnel in the LSU and interact with protein factors that function in enzymatic processing, targeting, and the membrane insertion of nascent chains at the exit of the ribosomal tunnel. The chain is Small ribosomal subunit protein uS14 (rps-29) from Neurospora crassa (strain ATCC 24698 / 74-OR23-1A / CBS 708.71 / DSM 1257 / FGSC 987).